The primary structure comprises 163 residues: Peptidyl-prolyl cis-trans isomerase (163 aa).

One can recognise a PPIase cyclophilin-type domain in the interval 17–163 (KTAYATIKTN…IESVVFSSSL (147 aa)).

The protein belongs to the cyclophilin-type PPIase family.

The enzyme catalyses [protein]-peptidylproline (omega=180) = [protein]-peptidylproline (omega=0). Its function is as follows. PPIases accelerate the folding of proteins. It catalyzes the cis-trans isomerization of proline imidic peptide bonds in oligopeptides. In Helicobacter pylori (strain ATCC 700392 / 26695) (Campylobacter pylori), this protein is Peptidyl-prolyl cis-trans isomerase (ppiA).